The following is a 263-amino-acid chain: Trem-like transcript 4 protein (263 aa).

Residues 1 to 28 form the signal peptide; that stretch reads MAWRYSQLLLVPVQLVFLASVCCPGVWG. The region spanning 29-132 is the Ig-like V-type domain; sequence STVSEELHRM…LREVTVLRNI (104 aa). At 29–200 the chain is on the extracellular side; that stretch reads STVSEELHRM…GWTSPGLLVS (172 aa). Cys47 and Cys116 are oxidised to a cystine. Residue Asn100 is glycosylated (N-linked (GlcNAc...) asparagine). The tract at residues 168-191 is disordered; sequence SPEETTDSSINGTGHRNQSSSSPG. A helical membrane pass occupies residues 201–221; it reads VQYGLLLLKALMLSVFCVLLC. Residues 222–263 lie on the Cytoplasmic side of the membrane; the sequence is WRSGQGREYMAETMELSKLPHISKSLDTVSHISGYEKKANWY.

Interacts with TYROBP/DAP12. In terms of tissue distribution, predominantly expressed in spleen, with highest levels on selected populations of macrophages, including red pulp macrophages, and on subsets of dendritic cells (DC), mostly on CD8alpha(+) DC (at protein level). Also expressed on blood and spleen Ly6C(low) monocytes (at protein level). Not expressed on lymphocytes or granulocytes (at protein level).

The protein localises to the cell membrane. In terms of biological role, positively regulates Toll-like receptor signaling via TLR7, TLR9 and TLR13 in neutrophils and splenic macrophages. Regulates TLR7 signaling by controlling ligand-induced recruitment of TLR7 from the endoplasmic reticulum to endosomes and lysosomes. Positively regulates Toll-like receptor TLR9-induced production of inflammatory cytokines but is dispensable for IFNB1 production. Involved in the anti-viral response to several viruses including influenza virus, vesicular stomatitis virus and cytomegalovirus. Binds to late apoptotic, and necrotic cells, but not living or early apoptotic cells, but is not essential for uptake of dying cells by dendritic cells (DCs). Does not bind nucleic acids. May participate in antigen presentation. This chain is Trem-like transcript 4 protein (Treml4), found in Mus musculus (Mouse).